The chain runs to 215 residues: LexA repressor (215 aa).

A DNA-binding region (H-T-H motif) is located at residues 28–48; it reads RAEIAAELGFSSPNAAEEHLR. Residues serine 133 and lysine 170 each act as for autocatalytic cleavage activity in the active site.

It belongs to the peptidase S24 family. Homodimer.

It carries out the reaction Hydrolysis of Ala-|-Gly bond in repressor LexA.. In terms of biological role, represses a number of genes involved in the response to DNA damage (SOS response), including recA and lexA. In the presence of single-stranded DNA, RecA interacts with LexA causing an autocatalytic cleavage which disrupts the DNA-binding part of LexA, leading to derepression of the SOS regulon and eventually DNA repair. This is LexA repressor from Burkholderia thailandensis (strain ATCC 700388 / DSM 13276 / CCUG 48851 / CIP 106301 / E264).